A 119-amino-acid polypeptide reads, in one-letter code: Holo-[acyl-carrier-protein] synthase (119 aa).

Positions 8 and 53 each coordinate Mg(2+).

The protein belongs to the P-Pant transferase superfamily. AcpS family. Mg(2+) serves as cofactor.

It is found in the cytoplasm. The enzyme catalyses apo-[ACP] + CoA = holo-[ACP] + adenosine 3',5'-bisphosphate + H(+). In terms of biological role, transfers the 4'-phosphopantetheine moiety from coenzyme A to a Ser of acyl-carrier-protein. This is Holo-[acyl-carrier-protein] synthase from Petrotoga mobilis (strain DSM 10674 / SJ95).